Reading from the N-terminus, the 37-residue chain is Protein YhiY (37 aa).

The protein is Protein YhiY of Escherichia coli (strain K12).